Here is an 847-residue protein sequence, read N- to C-terminus: MASDIDQKDVDYAAKNLKLTTSLVANKPKDCPPEAPWGACYRVEINLENTGSKSLNENVEIYFSSIHRTLGSKSEEFKVEHINGDLHKITTTEKFKGLKGGKTKSFQVDFMNWIVSNSDFMPNYYVASEHLEGRNILNTVPIDAVHITEEVSGFTTGIKHTPNQLKRTANDLLPAATATTRYEQYSKVKDLGADAVSAHILPTPLETSVHEGSLNIAQGINIVSDALPADQVEALNFRFETLGVNTGTGVPVNVTIKADSSKKSGSYTLDVTSSGIRIVGVDKAGAFYGVQSLAGLVTVGKDTINQVSINDEPRLDYRGMHMDVSRNFHSKELVFRFLDQMAAYKMNKFHFHLADDEGWRLEINGLPELTQVGAHRCHDVEQNKCMMPQLGSGAELPNNGSGYYTREDYKEILAYASARNIQVIPSMDMPGHSLAAVKSMEARYRKFMAEGDVVKAEMYLLSDPNDTTQYYSIQHYQDNTINPCMESSFVFMDKVIDEINKLHKEGGQPLTDYHIGADETAGAWGDSPECRKMFVAPESGVKNAKDINGYFINRISHILDAKGLTLGAWNDGLSHKALDASSLAGNPPKAWVWGTMFWGGVDQYNSFANKGYDVVVTPPDAYYFDMPYENDPEERGYYWATRFNDTKKVFSFMPENVPANVEWMTDRMGAKISATTGEKTHDFLGVQGALWSETIRTDAQVEYMVLPRMIAVAERGWHKASWEEEHKEGITYTSNVDGHEGTTHLNDNIATRDADWAHFSNILGYKEMPKLDKAGITYRLPVLGAVIKNNILDVVTEFHGVAIQYSLDGKTWHKYDDTKKPQVSTKALVRSVSTNGRTGRAVEVLAK.

Intrachain disulfides connect Cys-31–Cys-40, Cys-377–Cys-385, and Cys-484–Cys-530. The active-site Proton donor is the Glu-519.

Belongs to the glycosyl hydrolase 20 family.

It carries out the reaction Hydrolysis of terminal non-reducing N-acetyl-D-hexosamine residues in N-acetyl-beta-D-hexosaminides.. The protein operates within glycan degradation; chitin degradation. Its function is as follows. Hydrolysis of terminal, non-reducing N-acetyl-beta-D-glucosamine residues in chitobiose and higher analogs, and in glycoproteins. This Vibrio vulnificus protein is Beta-hexosaminidase (hex).